The sequence spans 63 residues: Small ribosomal subunit protein eS17 (63 aa).

This sequence belongs to the eukaryotic ribosomal protein eS17 family.

In Methanococcus aeolicus (strain ATCC BAA-1280 / DSM 17508 / OCM 812 / Nankai-3), this protein is Small ribosomal subunit protein eS17.